A 305-amino-acid polypeptide reads, in one-letter code: Protoheme IX farnesyltransferase 2 (305 aa).

Transmembrane regions (helical) follow at residues 31 to 51, 53 to 73, 103 to 123, 125 to 145, 152 to 172, 179 to 199, 231 to 251, and 277 to 297; these read VVML…ETWI, WKIL…AAVI, ALVF…LWVN, LTAL…TMYL, NIVI…TAVT, ALLL…ALAI, VLLA…AIYL, and AMKT…VLLV.

Belongs to the UbiA prenyltransferase family. Protoheme IX farnesyltransferase subfamily.

The protein resides in the cell inner membrane. It carries out the reaction heme b + (2E,6E)-farnesyl diphosphate + H2O = Fe(II)-heme o + diphosphate. It functions in the pathway porphyrin-containing compound metabolism; heme O biosynthesis; heme O from protoheme: step 1/1. Its function is as follows. Converts heme B (protoheme IX) to heme O by substitution of the vinyl group on carbon 2 of heme B porphyrin ring with a hydroxyethyl farnesyl side group. In Pseudoalteromonas atlantica (strain T6c / ATCC BAA-1087), this protein is Protoheme IX farnesyltransferase 2.